A 1456-amino-acid chain; its full sequence is Macrophage mannose receptor 1 (1456 aa).

Residues 1-19 form the signal peptide; it reads MRLLLLLAFISVIPVSVQL. The Extracellular portion of the chain corresponds to 20-1388; sequence LDARQFLIYN…DPQPKGSSKA (1369 aa). The 121-residue stretch at 22-142 folds into the Ricin B-type lectin domain; it reads ARQFLIYNED…SGLWSRWKVY (121 aa). 7 cysteine pairs are disulfide-bonded: C35/C49, C74/C91, C102/C149, C168/C194, C182/C209, C247/C340, and C316/C332. N104 carries N-linked (GlcNAc...) asparagine glycosylation. One can recognise a Fibronectin type-II domain in the interval 163–211; that stretch reads ANGAVCAFPFKFENKWYADCTSAGRSDGWLWCGTTTDYDKDKLFGFCPL. Residues 225 to 341 form the C-type lectin 1 domain; that stretch reads LTGILYQINS…CVQKLGYICK (117 aa). Residue N344 is glycosylated (N-linked (GlcNAc...) asparagine). C-type lectin domains are found at residues 369–487, 511–626, 655–778, and 807–923; these read YAGH…YICK, HGFY…FVCK, KTSM…WICQ, and YKDY…FICQ. Intrachain disulfides connect C391/C486 and C463/C478. N-linked (GlcNAc...) asparagine glycosylation is present at N529. Intrachain disulfides connect C532/C625, C600/C617, C680/C777, C753/C769, C828/C922, and C899/C914. N-linked (GlcNAc...) asparagine glycosylation is found at N926 and N930. 3 C-type lectin domains span residues 951–1079, 1101–1212, and 1240–1355; these read YKNK…YICQ, YGKS…FLCK, and FYGH…FICK. 6 disulfide bridges follow: C976-C1078, C1051-C1070, C1122-C1211, C1189-C1203, C1262-C1354, and C1331-C1346. Residue N1159 is glycosylated (N-linked (GlcNAc...) asparagine). Residue N1204 is glycosylated (N-linked (GlcNAc...) asparagine). A helical transmembrane segment spans residues 1389–1409; it reads AGVVTVVLLIVIGAGVAAYFF. Topologically, residues 1410–1456 are cytoplasmic; the sequence is YKKRHALHIPQEATFENTLYFNSNLSPGTSDTKDLMGNIEQNEHAII.

In terms of tissue distribution, detected in macrophages.

The protein localises to the endosome membrane. It localises to the cell membrane. Its function is as follows. Mediates the endocytosis of glycoproteins by macrophages. Binds both sulfated and non-sulfated polysaccharide chains. Acts as phagocytic receptor for bacteria, fungi and other pathogens. The sequence is that of Macrophage mannose receptor 1 (Mrc1) from Mus musculus (Mouse).